A 539-amino-acid chain; its full sequence is Lysosomal cobalamin transport escort protein LMBD1 (539 aa).

Over methionine 1 to glutamate 7 the chain is Extracellular. A helical membrane pass occupies residues leucine 8 to valine 28. Over tyrosine 29–alanine 47 the chain is Cytoplasmic. A helical membrane pass occupies residues isoleucine 48 to valine 68. Topologically, residues serine 69 to glycine 97 are extracellular. N-linked (GlcNAc...) asparagine glycosylation is found at asparagine 75 and asparagine 85. A helical transmembrane segment spans residues tyrosine 98–phenylalanine 118. Residues tyrosine 119 to threonine 141 are Cytoplasmic-facing. Residues leucine 142–isoleucine 162 traverse the membrane as a helical segment. At proline 163–histidine 185 the chain is on the extracellular side. N-linked (GlcNAc...) asparagine glycosylation is present at asparagine 167. Residues glycine 186–isoleucine 206 traverse the membrane as a helical segment. At threonine 207–lysine 302 the chain is on the cytoplasmic side. A helical membrane pass occupies residues isoleucine 303–serine 323. Topologically, residues asparagine 324 to proline 361 are extracellular. The N-linked (GlcNAc...) asparagine glycan is linked to asparagine 344. Residues leucine 362 to isoleucine 382 form a helical membrane-spanning segment. Residues arginine 383–glutamine 405 lie on the Cytoplasmic side of the membrane. A helical transmembrane segment spans residues alanine 406–tyrosine 426. Residues serine 427 to lysine 483 lie on the Extracellular side of the membrane. Residues asparagine 445 and asparagine 454 are each glycosylated (N-linked (GlcNAc...) asparagine). The chain crosses the membrane as a helical span at residues phenylalanine 484 to isoleucine 504. At glycine 505–cysteine 539 the chain is on the cytoplasmic side.

It belongs to the LIMR family. LMBRD1 subfamily.

Its subcellular location is the endoplasmic reticulum membrane. The protein resides in the lysosome membrane. The protein localises to the cell membrane. Its function is as follows. Lysosomal membrane chaperone required to export cobalamin (vitamin B12) from the lysosome to the cytosol, allowing its conversion to cofactors. Targets ABCD4 transporter from the endoplasmic reticulum to the lysosome. Then forms a complex with lysosomal ABCD4 and cytoplasmic MMACHC to transport cobalamin across the lysosomal membrane. May play a role in mediating and regulating the internalization of the insulin receptor. In Gallus gallus (Chicken), this protein is Lysosomal cobalamin transport escort protein LMBD1 (LMBRD1).